Here is a 135-residue protein sequence, read N- to C-terminus: Sex-regulated protein janus-A (135 aa).

Lys-37 contacts substrate. The active-site Proton acceptor is His-63. 104–106 serves as a coordination point for substrate; it reads SQG.

The protein belongs to the janus family.

Its function is as follows. JanA and janB regulate somatic sex differentiation. This chain is Sex-regulated protein janus-A (janA), found in Drosophila yakuba (Fruit fly).